A 278-amino-acid chain; its full sequence is Adenosylcobinamide-GDP ribazoletransferase (278 aa).

The next 7 helical transmembrane spans lie at Ala31 to Phe51, Thr66 to Leu86, Thr115 to Leu135, Ile148 to Pro168, Asp187 to Phe207, Ala215 to Leu237, and Ile247 to Ile267.

This sequence belongs to the CobS family. It depends on Mg(2+) as a cofactor.

It is found in the cell membrane. It catalyses the reaction alpha-ribazole + adenosylcob(III)inamide-GDP = adenosylcob(III)alamin + GMP + H(+). The enzyme catalyses alpha-ribazole 5'-phosphate + adenosylcob(III)inamide-GDP = adenosylcob(III)alamin 5'-phosphate + GMP + H(+). The protein operates within cofactor biosynthesis; adenosylcobalamin biosynthesis; adenosylcobalamin from cob(II)yrinate a,c-diamide: step 7/7. In terms of biological role, joins adenosylcobinamide-GDP and alpha-ribazole to generate adenosylcobalamin (Ado-cobalamin). Also synthesizes adenosylcobalamin 5'-phosphate from adenosylcobinamide-GDP and alpha-ribazole 5'-phosphate. The chain is Adenosylcobinamide-GDP ribazoletransferase from Frankia casuarinae (strain DSM 45818 / CECT 9043 / HFP020203 / CcI3).